The primary structure comprises 371 residues: uncharacterized protein (371 aa).

This sequence to A.pernix APE_1804 and S.solfataricus SSO2105.

This is an uncharacterized protein from Aeropyrum pernix (strain ATCC 700893 / DSM 11879 / JCM 9820 / NBRC 100138 / K1).